The sequence spans 201 residues: Potassium-transporting ATPase KdpC subunit (201 aa).

A helical transmembrane segment spans residues 7-29 (PALVLLTALTAITGLAYPLAMTG).

Belongs to the KdpC family. As to quaternary structure, the system is composed of three essential subunits: KdpA, KdpB and KdpC.

Its subcellular location is the cell inner membrane. Its function is as follows. Part of the high-affinity ATP-driven potassium transport (or Kdp) system, which catalyzes the hydrolysis of ATP coupled with the electrogenic transport of potassium into the cytoplasm. This subunit acts as a catalytic chaperone that increases the ATP-binding affinity of the ATP-hydrolyzing subunit KdpB by the formation of a transient KdpB/KdpC/ATP ternary complex. This is Potassium-transporting ATPase KdpC subunit from Methylorubrum populi (strain ATCC BAA-705 / NCIMB 13946 / BJ001) (Methylobacterium populi).